We begin with the raw amino-acid sequence, 565 residues long: Glycine--tRNA ligase (565 aa).

Substrate is bound by residues arginine 98 and glutamate 164. Residues 196–198 (RNE), 206–211 (IRLREF), 323–324 (EI), and 440–443 (GIDR) contribute to the ATP site. 211–215 (FTQAE) is a substrate binding site. Substrate is bound at residue 436-440 (EPSFG).

It belongs to the class-II aminoacyl-tRNA synthetase family.

Its subcellular location is the cytoplasm. The enzyme catalyses tRNA(Gly) + glycine + ATP = glycyl-tRNA(Gly) + AMP + diphosphate. Its function is as follows. Catalyzes the attachment of glycine to tRNA(Gly). In Methanothermobacter thermautotrophicus (strain ATCC 29096 / DSM 1053 / JCM 10044 / NBRC 100330 / Delta H) (Methanobacterium thermoautotrophicum), this protein is Glycine--tRNA ligase.